Consider the following 704-residue polypeptide: MTRKTPIERYRNIGISAHIDAGKTTTTERILFYTGVNYKLGEVHEGTATMDWMEQEQERGITITSAATTAFWKGMAGNYPEHRINIIDTPGHVDFTIEVERSMRVLDGAVMVYDSVGGVQPQSETVWRQANKYKVPRIAFVNKMDRVGADFFRVQRQIGERMKGVAVPVQIPIGAEDHFQGVVDLVKMKAIVWDDISQGLHFEYRDIPDELLATARTWRDKMIEAAAEASEPLLEKYLAGEALSEDEIRQGIRQRTVANEIVPMLCGSAFKNKGVQALLDAIIDYLPSPVDVPAILGHTEDDKTAERHPGDNEPFSALAFKVMTDPFVGQLIFFRVYSGVVKTGDTVYIPGKTRKERLGRLLQMHANVRQEIKEVHAGDIAAAVGLKDVTTGDTLCDPDKVIMLERMVFPEPVISQAVEPKTQADQEKMGVALHRLAQEDPSFRVQTDEESGQTIISGMGELHLEILVDRMKREFGVDATVGKPQVAYRETIKQAVKDVEGKFIKQSGGRGQYGHAVLNVEPQPPGKGYEFVDAIKGGVVPREYIPAVDKGIQDALTAGVLASYPVVDVKATLVFGSSHDVDSNENAFRMAGAIAFREALRRARPILLEPMMAVEVEMPEDFMGHVMGDLSTRRGMIQGMEDIAGGGGKLVRAEVPLSEMFGYSTTLRSLTQGRATYTMEFKHYTEAPADVSEAIIRGKGMGRQ.

The tr-type G domain maps to 8 to 290 (ERYRNIGISA…AIIDYLPSPV (283 aa)). Residues 17–24 (AHIDAGKT), 88–92 (DTPGH), and 142–145 (NKMD) each bind GTP.

Belongs to the TRAFAC class translation factor GTPase superfamily. Classic translation factor GTPase family. EF-G/EF-2 subfamily.

Its subcellular location is the cytoplasm. In terms of biological role, catalyzes the GTP-dependent ribosomal translocation step during translation elongation. During this step, the ribosome changes from the pre-translocational (PRE) to the post-translocational (POST) state as the newly formed A-site-bound peptidyl-tRNA and P-site-bound deacylated tRNA move to the P and E sites, respectively. Catalyzes the coordinated movement of the two tRNA molecules, the mRNA and conformational changes in the ribosome. The protein is Elongation factor G 2 of Polaromonas sp. (strain JS666 / ATCC BAA-500).